Consider the following 313-residue polypeptide: 4-diphosphocytidyl-2-C-methyl-D-erythritol kinase (313 aa).

Lys-10 is a catalytic residue. Position 95–105 (95–105 (PVTAGLGGGSS)) interacts with ATP. Asp-136 is a catalytic residue. Positions 289 to 313 (HPRVSPWRSPRSASSRSTRRSSRPT) are disordered. Residues 292 to 304 (VSPWRSPRSASSR) show a composition bias toward low complexity.

The protein belongs to the GHMP kinase family. IspE subfamily.

The enzyme catalyses 4-CDP-2-C-methyl-D-erythritol + ATP = 4-CDP-2-C-methyl-D-erythritol 2-phosphate + ADP + H(+). Its pathway is isoprenoid biosynthesis; isopentenyl diphosphate biosynthesis via DXP pathway; isopentenyl diphosphate from 1-deoxy-D-xylulose 5-phosphate: step 3/6. In terms of biological role, catalyzes the phosphorylation of the position 2 hydroxy group of 4-diphosphocytidyl-2C-methyl-D-erythritol. The protein is 4-diphosphocytidyl-2-C-methyl-D-erythritol kinase of Anaeromyxobacter sp. (strain K).